The sequence spans 248 residues: Sulfur carrier protein FdhD (248 aa).

The active-site Cysteine persulfide intermediate is the C99. 232–237 is a binding site for Mo-bis(molybdopterin guanine dinucleotide); the sequence is FVRGKR.

It belongs to the FdhD family.

It is found in the cytoplasm. Functionally, required for formate dehydrogenase (FDH) activity. Acts as a sulfur carrier protein that transfers sulfur from IscS to the molybdenum cofactor prior to its insertion into FDH. The sequence is that of Sulfur carrier protein FdhD from Methanothermobacter thermautotrophicus (strain ATCC 29096 / DSM 1053 / JCM 10044 / NBRC 100330 / Delta H) (Methanobacterium thermoautotrophicum).